A 184-amino-acid chain; its full sequence is MSQETEKDLEQTQNEELVEEAQSDEKKDQEVDPVEAAQAEAAEYKDKYIRAHADFENAKKRLEKDKMNAVAYANESFAKDILAVLDSFENALSAIEGANKENAAEVLEKMQEGVKLTYEQLKKVLEKNSIKEIESKGTFNPEVHQAIMQVDSDEHKTDDIVQVMQKGYTIKDRVLRPAMVSTAK.

Residues 1–10 show a composition bias toward basic and acidic residues; sequence MSQETEKDLE. The tract at residues 1–38 is disordered; that stretch reads MSQETEKDLEQTQNEELVEEAQSDEKKDQEVDPVEAAQ.

It belongs to the GrpE family. In terms of assembly, homodimer.

Its subcellular location is the cytoplasm. Participates actively in the response to hyperosmotic and heat shock by preventing the aggregation of stress-denatured proteins, in association with DnaK and GrpE. It is the nucleotide exchange factor for DnaK and may function as a thermosensor. Unfolded proteins bind initially to DnaJ; upon interaction with the DnaJ-bound protein, DnaK hydrolyzes its bound ATP, resulting in the formation of a stable complex. GrpE releases ADP from DnaK; ATP binding to DnaK triggers the release of the substrate protein, thus completing the reaction cycle. Several rounds of ATP-dependent interactions between DnaJ, DnaK and GrpE are required for fully efficient folding. This chain is Protein GrpE, found in Sulfurovum sp. (strain NBC37-1).